A 427-amino-acid polypeptide reads, in one-letter code: MGSVRTNRYSIVSSEEDGMKLATMAVANGFGNGKSKVHTRQQCRSRFVKKDGHCNVQFINVGEKGQRYLADIFTTCVDIRWRWMLVIFCLAFVLSWLFFGCVFWLIALLHGDLDASKEGKACVSEVNSFTAAFLFSIETQTTIGYGFRCVTDECPIAVFMVVFQSIVGCIIDAFIIGAVMAKMAKPKKRNETLVFSHNAVIAMRDGKLCLMWRVGNLRKSHLVEAHVRAQLLKSRITSEGEYIPLDQIDINVGFDSGIDRIFLVSPITIVHEIDEDSPLYDLSKQDIDNADFEIVVILEGMVEATAMTTQCRSSYLANEILWGHRYEPVLFEEKHYYKVDYSRFHKTYEVPNTPLCSARDLAEKKYILSNANSFCYENEVALTSKEEDDSENGVPESTSTDTPPDIDLHNQASVPLEPRPLRRESEI.

Residues methionine 1 to tryptophan 81 lie on the Cytoplasmic side of the membrane. At cysteine 76 the chain carries S-nitrosocysteine. The helical transmembrane segment at arginine 82 to isoleucine 106 threads the bilayer. Residues alanine 107–serine 128 lie on the Extracellular side of the membrane. The segment at residues phenylalanine 129–glutamine 140 is an intramembrane region (helical; Pore-forming). Residues threonine 141–phenylalanine 147 constitute an intramembrane region (pore-forming). Residues threonine 142 to phenylalanine 147 carry the Selectivity filter motif. At arginine 148 to isoleucine 156 the chain is on the extracellular side. Residues alanine 157–alanine 178 traverse the membrane as a helical segment. Residues valine 179 to isoleucine 427 lie on the Cytoplasmic side of the membrane. Residues alanine 181–leucine 208 are polyphosphoinositide (PIP2)-binding. Residues serine 384–isoleucine 427 form a disordered region. The short motif at serine 425–isoleucine 427 is the PDZ-binding element.

Belongs to the inward rectifier-type potassium channel (TC 1.A.2.1) family. KCNJ2 subfamily. As to quaternary structure, homotetramer. Homomultimeric and heteromultimeric association with KCNJ4/Kir2.3. Can form heteromeric channels with Kir2.6/KCNJ18. Associates, via its PDZ-recognition domain, with a complex containing LIN7A, LIN7B, LIN7C, DLG1, CASK and APBA1. S-nitrosylation increases the open probability and inward rectifying currents.

It localises to the cell membrane. Its subcellular location is the sarcolemma. It is found in the T-tubule. It carries out the reaction K(+)(in) = K(+)(out). Its activity is regulated as follows. Activated by phosphatidylinositol 4,5 biphosphate (PtdIns(4,5)P2). In terms of biological role, inward rectifier potassium channels are characterized by a greater tendency to allow potassium to flow into the cell rather than out of it. Their voltage dependence is regulated by the concentration of extracellular potassium; as external potassium is raised, the voltage range of the channel opening shifts to more positive voltages. The inward rectification is mainly due to the blockage of outward current by internal magnesium. Can be blocked by extracellular barium or cesium. Probably participates in establishing action potential waveform and excitability of neuronal and muscle tissues. In Macaca mulatta (Rhesus macaque), this protein is Inward rectifier potassium channel 2 (KCNJ2).